The sequence spans 394 residues: 1-deoxy-D-xylulose 5-phosphate reductoisomerase (394 aa).

7 residues coordinate NADPH: Thr-12, Gly-13, Ser-14, Ile-15, Lys-39, Gln-40, and Asn-126. Residue Lys-127 participates in 1-deoxy-D-xylulose 5-phosphate binding. An NADPH-binding site is contributed by Glu-128. Position 152 (Asp-152) interacts with Mn(2+). 1-deoxy-D-xylulose 5-phosphate is bound by residues Ser-153, Glu-154, Ser-183, and His-206. Residue Glu-154 coordinates Mn(2+). An NADPH-binding site is contributed by Gly-212. 1-deoxy-D-xylulose 5-phosphate contacts are provided by Ser-219, Asn-224, Lys-225, and Glu-228. Residue Glu-228 coordinates Mn(2+).

Belongs to the DXR family. Mg(2+) is required as a cofactor. Requires Mn(2+) as cofactor.

It carries out the reaction 2-C-methyl-D-erythritol 4-phosphate + NADP(+) = 1-deoxy-D-xylulose 5-phosphate + NADPH + H(+). The protein operates within isoprenoid biosynthesis; isopentenyl diphosphate biosynthesis via DXP pathway; isopentenyl diphosphate from 1-deoxy-D-xylulose 5-phosphate: step 1/6. Its function is as follows. Catalyzes the NADPH-dependent rearrangement and reduction of 1-deoxy-D-xylulose-5-phosphate (DXP) to 2-C-methyl-D-erythritol 4-phosphate (MEP). The chain is 1-deoxy-D-xylulose 5-phosphate reductoisomerase from Neisseria meningitidis serogroup A / serotype 4A (strain DSM 15465 / Z2491).